Here is a 114-residue protein sequence, read N- to C-terminus: Putative pterin-4-alpha-carbinolamine dehydratase (114 aa).

The protein belongs to the pterin-4-alpha-carbinolamine dehydratase family.

It catalyses the reaction (4aS,6R)-4a-hydroxy-L-erythro-5,6,7,8-tetrahydrobiopterin = (6R)-L-erythro-6,7-dihydrobiopterin + H2O. In Pseudoalteromonas translucida (strain TAC 125), this protein is Putative pterin-4-alpha-carbinolamine dehydratase.